The following is a 382-amino-acid chain: 3-hydroxyisobutyryl-CoA hydrolase, mitochondrial (382 aa).

4 residues coordinate substrate: Glu-117, Gly-142, Glu-165, and Asp-173.

This sequence belongs to the enoyl-CoA hydratase/isomerase family.

Its subcellular location is the mitochondrion. The enzyme catalyses 3-hydroxy-2-methylpropanoyl-CoA + H2O = 3-hydroxy-2-methylpropanoate + CoA + H(+). The protein operates within amino-acid degradation; L-valine degradation. In terms of biological role, hydrolyzes 3-hydroxyisobutyryl-CoA (HIBYL-CoA), a saline catabolite. Has high activity toward isobutyryl-CoA. Could be an isobutyryl-CoA dehydrogenase that functions in valine catabolism. Also hydrolyzes 3-hydroxypropanoyl-CoA. This Danio rerio (Zebrafish) protein is 3-hydroxyisobutyryl-CoA hydrolase, mitochondrial (hibch).